The following is a 107-amino-acid chain: Small ribosomal subunit protein uS10 (107 aa).

Belongs to the universal ribosomal protein uS10 family. In terms of assembly, part of the 30S ribosomal subunit.

Its function is as follows. Involved in the binding of tRNA to the ribosomes. The chain is Small ribosomal subunit protein uS10 from Deinococcus deserti (strain DSM 17065 / CIP 109153 / LMG 22923 / VCD115).